The chain runs to 219 residues: Maleylacetoacetate isomerase (219 aa).

Positions asparagine 4–proline 87 constitute a GST N-terminal domain. Glutathione-binding positions include serine 14–arginine 19, glutamine 45, glutamine 71–serine 72, glutamine 111, and asparagine 115–lysine 117. Residues glycine 92–proline 217 form the GST C-terminal domain.

It belongs to the GST superfamily. Zeta family. The cofactor is glutathione.

It carries out the reaction 4-maleylacetoacetate = 4-fumarylacetoacetate. It functions in the pathway amino-acid degradation; L-phenylalanine degradation; acetoacetate and fumarate from L-phenylalanine: step 5/6. In Dictyostelium discoideum (Social amoeba), this protein is Maleylacetoacetate isomerase (mai).